The sequence spans 351 residues: Fe(3+) ions import ATP-binding protein FbpC (351 aa).

Residues 7-237 (VELKNVTKRF…PASEFMASFM (231 aa)) form the ABC transporter domain. Residue 39 to 46 (GPSGCGKT) coordinates ATP.

The protein belongs to the ABC transporter superfamily. Fe(3+) ion importer (TC 3.A.1.10) family. As to quaternary structure, the complex is composed of two ATP-binding proteins (FbpC), two transmembrane proteins (FbpB) and a solute-binding protein (FbpA).

It is found in the cell inner membrane. It carries out the reaction Fe(3+)(out) + ATP + H2O = Fe(3+)(in) + ADP + phosphate + H(+). Its function is as follows. Part of the ABC transporter complex FbpABC involved in Fe(3+) ions import. Responsible for energy coupling to the transport system. This is Fe(3+) ions import ATP-binding protein FbpC from Photorhabdus laumondii subsp. laumondii (strain DSM 15139 / CIP 105565 / TT01) (Photorhabdus luminescens subsp. laumondii).